Here is a 79-residue protein sequence, read N- to C-terminus: uncharacterized protein (79 aa).

The protein resides in the mitochondrion. This is an uncharacterized protein from Marchantia polymorpha (Common liverwort).